Consider the following 242-residue polypeptide: Uridylate kinase (242 aa).

Position 13 to 16 (13 to 16 (KLSG)) interacts with ATP. Gly55 is a binding site for UMP. ATP contacts are provided by Gly56 and Arg60. UMP contacts are provided by residues Asp75 and 136–143 (TGNPFFTT). The ATP site is built by Thr163, Tyr169, and Asp172.

It belongs to the UMP kinase family. As to quaternary structure, homohexamer.

Its subcellular location is the cytoplasm. It carries out the reaction UMP + ATP = UDP + ADP. It participates in pyrimidine metabolism; CTP biosynthesis via de novo pathway; UDP from UMP (UMPK route): step 1/1. Inhibited by UTP. In terms of biological role, catalyzes the reversible phosphorylation of UMP to UDP. This chain is Uridylate kinase, found in Zymomonas mobilis subsp. mobilis (strain ATCC 31821 / ZM4 / CP4).